We begin with the raw amino-acid sequence, 340 residues long: Uroporphyrinogen decarboxylase (340 aa).

Substrate contacts are provided by residues 21–25 (RQAGR), Asp71, Tyr148, Ser203, and His316.

The protein belongs to the uroporphyrinogen decarboxylase family. In terms of assembly, homodimer.

Its subcellular location is the cytoplasm. The catalysed reaction is uroporphyrinogen III + 4 H(+) = coproporphyrinogen III + 4 CO2. The protein operates within porphyrin-containing compound metabolism; protoporphyrin-IX biosynthesis; coproporphyrinogen-III from 5-aminolevulinate: step 4/4. In terms of biological role, catalyzes the decarboxylation of four acetate groups of uroporphyrinogen-III to yield coproporphyrinogen-III. The protein is Uroporphyrinogen decarboxylase of Campylobacter lari (strain RM2100 / D67 / ATCC BAA-1060).